The sequence spans 462 residues: uncharacterized protein (462 aa).

2 consecutive transmembrane segments (helical) span residues 12-32 and 257-277; these read WWWL…APTV and GLCV…LELV.

Belongs to the HHV-5 US29 protein family.

It localises to the host membrane. This is an uncharacterized protein from Human cytomegalovirus (strain AD169) (HHV-5).